Here is a 189-residue protein sequence, read N- to C-terminus: UPF0301 protein A1C_00165 (189 aa).

It belongs to the UPF0301 (AlgH) family.

The polypeptide is UPF0301 protein A1C_00165 (Rickettsia akari (strain Hartford)).